The chain runs to 166 residues: MSTVGLFHFPTPLTRICPAPWGLRLWEKLTLLSPGIAVTPVQMAGKKDYPALLSLDENELEEQFVKGHGPGGQATNKTSNCVVLKHIPSGIVVKCHQTRSVDQNRKLARKILQEKVDVFYNGENSPVHKEKREAAKKKQERKKRAKETLEKKKLLKELWESSKKVH.

Residues 1-35 (MSTVGLFHFPTPLTRICPAPWGLRLWEKLTLLSPG) constitute a mitochondrion transit peptide. Positions 57–121 (ENELEEQFVK…LQEKVDVFYN (65 aa)) are GGQ domain. Positions 71 to 73 (GGQ) match the GGQ motif. Q73 carries the post-translational modification N5-methylglutamine. The segment at 122 to 148 (GENSPVHKEKREAAKKKQERKKRAKET) is disordered. Over residues 126–137 (PVHKEKREAAKK) the composition is skewed to basic and acidic residues. A coiled-coil region spans residues 127 to 160 (VHKEKREAAKKKQERKKRAKETLEKKKLLKELWE).

It belongs to the prokaryotic/mitochondrial release factor family. In terms of assembly, interacts (via C-terminus) with MTRES1 (via S4 domain). Associates with mitoribosomal S39 large subunit, peptidyl tRNA and nascent chain. Methylation of glutamine in the GGQ triplet by HEMK1. Expressed in all areas of the brain tested.

The protein localises to the mitochondrion. Part of a mitoribosome-associated quality control pathway that prevents aberrant translation by responding to interruptions during elongation. As heterodimer with MTRES1, ejects the unfinished nascent chain and peptidyl transfer RNA (tRNA), respectively, from stalled ribosomes. Recruitment of mitoribosome biogenesis factors to these quality control intermediates suggests additional roles for MTRES1 and MTRF during mitoribosome rescue. The protein is Mitochondrial translation release factor in rescue of Homo sapiens (Human).